A 251-amino-acid chain; its full sequence is Putative deaminase AgaI (251 aa).

The active-site Proton acceptor; for enolization step is the Asp86. Asn154 acts as the For ring-opening step in catalysis. Residue His156 is the Proton acceptor; for ring-opening step of the active site. The active-site For ring-opening step is the Glu161.

The protein belongs to the glucosamine/galactosamine-6-phosphate isomerase family.

This Escherichia coli (strain K12) protein is Putative deaminase AgaI (agaI).